A 485-amino-acid chain; its full sequence is Benzaldehyde dehydrogenase YfmT (485 aa).

NAD(+) is bound at residue 231-236 (GSTKVG). Catalysis depends on residues Glu253 and Cys287.

This sequence belongs to the aldehyde dehydrogenase family.

It carries out the reaction benzaldehyde + NAD(+) + H2O = benzoate + NADH + 2 H(+). The enzyme catalyses vanillin + NAD(+) + H2O = vanillate + NADH + 2 H(+). A benzaldehyde dehydrogenase able to act on substrates with 3- and 4-hydroxy and methoxy substitutions; converts vanillin (4-hydroxy-3-methoxybenzaldehyde) to vanillic acid in vitro. The physiological substrate is unknown. In Bacillus subtilis (strain 168), this protein is Benzaldehyde dehydrogenase YfmT (yfmT).